A 399-amino-acid polypeptide reads, in one-letter code: Tryptophan synthase beta chain (399 aa).

Lys92 is subject to N6-(pyridoxal phosphate)lysine.

The protein belongs to the TrpB family. Tetramer of two alpha and two beta chains. It depends on pyridoxal 5'-phosphate as a cofactor.

The enzyme catalyses (1S,2R)-1-C-(indol-3-yl)glycerol 3-phosphate + L-serine = D-glyceraldehyde 3-phosphate + L-tryptophan + H2O. It functions in the pathway amino-acid biosynthesis; L-tryptophan biosynthesis; L-tryptophan from chorismate: step 5/5. The beta subunit is responsible for the synthesis of L-tryptophan from indole and L-serine. This chain is Tryptophan synthase beta chain, found in Bordetella bronchiseptica (strain ATCC BAA-588 / NCTC 13252 / RB50) (Alcaligenes bronchisepticus).